Reading from the N-terminus, the 253-residue chain is Sec-independent protein translocase protein TatC (253 aa).

The next 5 helical transmembrane spans lie at 19–39 (ILII…LATP), 70–90 (FAFT…LWAF), 109–129 (IAFF…FPFL), 154–174 (FLFQ…VVMF), and 194–214 (FFVL…SHLM).

The protein belongs to the TatC family. As to quaternary structure, forms a complex with TatA.

Its subcellular location is the cell membrane. Part of the twin-arginine translocation (Tat) system that transports large folded proteins containing a characteristic twin-arginine motif in their signal peptide across membranes. The sequence is that of Sec-independent protein translocase protein TatC from Halalkalibacterium halodurans (strain ATCC BAA-125 / DSM 18197 / FERM 7344 / JCM 9153 / C-125) (Bacillus halodurans).